The sequence spans 895 residues: Alanine--tRNA ligase (895 aa).

H586, H590, C690, and H694 together coordinate Zn(2+).

Belongs to the class-II aminoacyl-tRNA synthetase family. Zn(2+) serves as cofactor.

It localises to the cytoplasm. It carries out the reaction tRNA(Ala) + L-alanine + ATP = L-alanyl-tRNA(Ala) + AMP + diphosphate. Its function is as follows. Catalyzes the attachment of alanine to tRNA(Ala) in a two-step reaction: alanine is first activated by ATP to form Ala-AMP and then transferred to the acceptor end of tRNA(Ala). Also edits incorrectly charged Ser-tRNA(Ala) and Gly-tRNA(Ala) via its editing domain. The polypeptide is Alanine--tRNA ligase (Korarchaeum cryptofilum (strain OPF8)).